The sequence spans 730 residues: Catalase-peroxidase (730 aa).

Basic and acidic residues predominate over residues 1 to 11; the sequence is MDAKTDDKDAG. The first 21 residues, 1–21, serve as a signal peptide directing secretion; it reads MDAKTDDKDAGKCPFSSGSHA. The tract at residues 1 to 24 is disordered; sequence MDAKTDDKDAGKCPFSSGSHAHRN. Positions 96–218 form a cross-link, tryptophyl-tyrosyl-methioninium (Trp-Tyr) (with M-244); sequence WHSAGTYRIS…LGAVQMGLIY (123 aa). The active-site Proton acceptor is the histidine 97. Residues 218-244 constitute a cross-link (tryptophyl-tyrosyl-methioninium (Tyr-Met) (with W-96)); that stretch reads YVNPEGPNGNPDPVGSAKDIRETFYRM. Residue histidine 259 participates in heme b binding.

The protein belongs to the peroxidase family. Peroxidase/catalase subfamily. As to quaternary structure, homodimer or homotetramer. Heme b serves as cofactor. Formation of the three residue Trp-Tyr-Met cross-link is important for the catalase, but not the peroxidase activity of the enzyme.

The enzyme catalyses H2O2 + AH2 = A + 2 H2O. The catalysed reaction is 2 H2O2 = O2 + 2 H2O. Its function is as follows. Bifunctional enzyme with both catalase and broad-spectrum peroxidase activity. The chain is Catalase-peroxidase from Rhodopseudomonas palustris (strain BisA53).